An 84-amino-acid chain; its full sequence is GTP cyclohydrolase 1 feedback regulatory protein (84 aa).

The protein belongs to the GFRP family. In terms of assembly, homopentamer. Forms a complex with GCH1 where a GCH1 homodecamer is sandwiched by two GFRP homopentamers.

It localises to the nucleus. Its subcellular location is the nucleus membrane. It is found in the cytoplasm. The protein resides in the cytosol. Mediates tetrahydrobiopterin inhibition of GTP cyclohydrolase 1. The sequence is that of GTP cyclohydrolase 1 feedback regulatory protein (gchfr) from Xenopus tropicalis (Western clawed frog).